The chain runs to 151 residues: MNPAHLLVLSAVCVSLLGASSIPPQPLHLIQFGNMIQCTVPGFLSWIKYADYGCYCGAGGSGTPVDKLDRCCQVHDNCYTQAQKLPACSSIMDSPYVKIYSYDCSERTVTCKADNDECAAFICNCDRVAAHCFAASPYNNNNYNIDTTTRC.

The N-terminal stretch at 1–21 (MNPAHLLVLSAVCVSLLGASS) is a signal peptide. The propeptide occupies 22 to 27 (IPPQPL). 7 cysteine pairs are disulfide-bonded: cysteine 38/cysteine 104, cysteine 54/cysteine 151, cysteine 56/cysteine 72, cysteine 71/cysteine 132, cysteine 78/cysteine 125, cysteine 88/cysteine 118, and cysteine 111/cysteine 123. Tyrosine 55, glycine 57, and glycine 59 together coordinate Ca(2+). The active site involves histidine 75. Ca(2+) is bound at residue aspartate 76. Aspartate 126 is an active-site residue.

Requires Ca(2+) as cofactor. In terms of tissue distribution, expressed by the venom gland.

The protein resides in the secreted. It catalyses the reaction a 1,2-diacyl-sn-glycero-3-phosphocholine + H2O = a 1-acyl-sn-glycero-3-phosphocholine + a fatty acid + H(+). Functionally, snake venom phospholipase A2 (PLA2) that may exhibit cardiotoxicity, myotoxicity, antiplatelet activity, and edema-inducing activity. PLA2 catalyzes the calcium-dependent hydrolysis of the 2-acyl groups in 3-sn-phosphoglycerides. This Ophiophagus hannah (King cobra) protein is Acidic phospholipase A2 1.